The chain runs to 455 residues: MSTKLTGYVWDGCAASGMKLSSVAIMARLADFSNDEGVCWPSIETIARQIGAGMSTVRTAIARLEAEGWLTRKARRQGDGSSPHCAVVDEYHEHATDALYTTMLTGMGARRQPLMWAITTAGYNIEGPCYDKRREVIEMLNGSVPNDELFGIIYTVDEGDDWTDPQVLEKANPNIGVSVYREFLLSQQQRAKNNARLANVFKTKHLNIWASARSAYFNLVSWQSCEDKSLTLEQFEGQPCILAFDLARKLDMNSMARLYTREIDGKTHYYSVAPRFWVPYDTVYSVEKNEDRRTAERFQKWVEMGVLTVTDGAEVDYRYILEEAKAANKISPVSESPIDPFGATGLSHDLADEDLNPVTIIQNYTNMSDPMKELEAAIESGRFHHDGNPIMTWCIGNVVGKTIPGNDDVVKPVKEQAENKIDGAVALIMAVGRAMLYEKEDTLSDHIESYGIRSL.

This sequence belongs to the phage terminase family.

This is Protein YmfN (ymfN) from Escherichia coli (strain K12).